Here is a 56-residue protein sequence, read N- to C-terminus: Large ribosomal subunit protein bL33 (56 aa).

Residues 1 to 12 (MASKGGREKIKL) show a composition bias toward basic and acidic residues. The segment at 1-27 (MASKGGREKIKLESTAGTGHFYTTNKN) is disordered.

Belongs to the bacterial ribosomal protein bL33 family.

The polypeptide is Large ribosomal subunit protein bL33 (Leptothrix cholodnii (strain ATCC 51168 / LMG 8142 / SP-6) (Leptothrix discophora (strain SP-6))).